The primary structure comprises 444 residues: tRNA-2-methylthio-N(6)-dimethylallyladenosine synthase (444 aa).

Positions 7–121 constitute an MTTase N-terminal domain; it reads KTFHVKSFGC…LPELIARAER (115 aa). Residues Cys16, Cys52, Cys84, Cys158, Cys162, and Cys165 each contribute to the [4Fe-4S] cluster site. Residues 144–376 form the Radical SAM core domain; it reads GNQRPTAFLT…QALLNEQQQA (233 aa). A TRAM domain is found at 379-441; sequence EATVGRTTRL…PNSLGAEPLM (63 aa).

It belongs to the methylthiotransferase family. MiaB subfamily. Monomer. The cofactor is [4Fe-4S] cluster.

Its subcellular location is the cytoplasm. The enzyme catalyses N(6)-dimethylallyladenosine(37) in tRNA + (sulfur carrier)-SH + AH2 + 2 S-adenosyl-L-methionine = 2-methylsulfanyl-N(6)-dimethylallyladenosine(37) in tRNA + (sulfur carrier)-H + 5'-deoxyadenosine + L-methionine + A + S-adenosyl-L-homocysteine + 2 H(+). Its function is as follows. Catalyzes the methylthiolation of N6-(dimethylallyl)adenosine (i(6)A), leading to the formation of 2-methylthio-N6-(dimethylallyl)adenosine (ms(2)i(6)A) at position 37 in tRNAs that read codons beginning with uridine. The sequence is that of tRNA-2-methylthio-N(6)-dimethylallyladenosine synthase from Sphingopyxis alaskensis (strain DSM 13593 / LMG 18877 / RB2256) (Sphingomonas alaskensis).